Consider the following 110-residue polypeptide: uncharacterized protein (110 aa).

The next 2 helical transmembrane spans lie at 21–41 and 63–83; these read IQLA…PQIC and PSMI…IIVV.

It is found in the membrane. This is an uncharacterized protein from Saccharomyces cerevisiae (strain ATCC 204508 / S288c) (Baker's yeast).